The primary structure comprises 437 residues: Methylenetetrahydrofolate--tRNA-(uracil-5-)-methyltransferase TrmFO (437 aa).

8–13 (GAGLAG) contributes to the FAD binding site.

The protein belongs to the MnmG family. TrmFO subfamily. FAD serves as cofactor.

It is found in the cytoplasm. It catalyses the reaction uridine(54) in tRNA + (6R)-5,10-methylene-5,6,7,8-tetrahydrofolate + NADH + H(+) = 5-methyluridine(54) in tRNA + (6S)-5,6,7,8-tetrahydrofolate + NAD(+). It carries out the reaction uridine(54) in tRNA + (6R)-5,10-methylene-5,6,7,8-tetrahydrofolate + NADPH + H(+) = 5-methyluridine(54) in tRNA + (6S)-5,6,7,8-tetrahydrofolate + NADP(+). Functionally, catalyzes the folate-dependent formation of 5-methyl-uridine at position 54 (M-5-U54) in all tRNAs. The polypeptide is Methylenetetrahydrofolate--tRNA-(uracil-5-)-methyltransferase TrmFO (Desulfitobacterium hafniense (strain Y51)).